The chain runs to 370 residues: Notoamide biosynthesis cluster protein J (370 aa).

Positions 1–22 (MRIMSIMLHLLATILLSSAVSA) are cleaved as a signal peptide. 7 N-linked (GlcNAc...) asparagine glycosylation sites follow: Asn-159, Asn-167, Asn-192, Asn-235, Asn-282, Asn-340, and Asn-346.

Its function is as follows. Part of the gene cluster that mediates the biosynthesis of notoamide, a fungal indole alkaloid that belongs to a family of natural products containing a characteristic bicyclo[2.2.2]diazaoctane core. The first step of notoamide biosynthesis involves coupling of L-proline and L-tryptophan by the bimodular NRPS notE, to produce cyclo-L-tryptophan-L-proline called brevianamide F. The reverse prenyltransferase notF then acts as a deoxybrevianamide E synthase and converts brevianamide F to deoxybrevianamide E via reverse prenylation at C-2 of the indole ring leading to the bicyclo[2.2.2]diazaoctane core. Deoxybrevianamide E is further hydroxylated at C-6 of the indole ring, likely catalyzed by the cytochrome P450 monooxygenase notG, to yield 6-hydroxy-deoxybrevianamide E. 6-hydroxy-deoxybrevianamide E is a specific substrate of the prenyltransferase notC for normal prenylation at C-7 to produce 6-hydroxy-7-prenyl-deoxybrevianamide, also called notoamide S. As the proposed pivotal branching point in notoamide biosynthesis, notoamide S can be diverted to notoamide E through an oxidative pyran ring closure putatively catalyzed by either notH cytochrome P450 monooxygenase or the notD FAD-linked oxidoreductase. This step would be followed by an indole 2,3-epoxidation-initiated pinacol-like rearrangement catalyzed by the notB FAD-dependent monooxygenase leading to the formation of notoamide C and notoamide D. On the other hand notoamide S is converted to notoamide T by notH (or notD), a bifunctional oxidase that also functions as the intramolecular Diels-Alderase responsible for generation of (+)-notoamide T. To generate antipodal (-)-notoaminide T, notH' (or notD') in Aspergillus versicolor is expected to catalyze a Diels-Alder reaction leading to the opposite stereochemistry. The remaining oxidoreductase notD (or notH) likely catalyzes the oxidative pyran ring formation to yield (+)-stephacidin A. The FAD-dependent monooxygenase notI is highly similar to notB and is predicted to catalyze a similar conversion from (+)-stephacidin A to (-)-notoamide B via the 2,3-epoxidation of (+)-stephacidin A followed by a pinacol-type rearrangement. Finally, it remains unclear which enzyme could be responsible for the final hydroxylation steps leading to notoamide A and sclerotiamide. The function of notJ in the notoamide biosynthesis has not been determined yet. The chain is Notoamide biosynthesis cluster protein J from Aspergillus sp. (strain MF297-2).